A 332-amino-acid chain; its full sequence is Methionine import ATP-binding protein MetN (332 aa).

The region spanning 2-241 (IELKGLTKVF…PGSRLRELFY (240 aa)) is the ABC transporter domain. ATP is bound at residue 38-45 (GQSGAGKS).

The protein belongs to the ABC transporter superfamily. Methionine importer (TC 3.A.1.24) family. The complex is composed of two ATP-binding proteins (MetN), two transmembrane proteins (MetI) and a solute-binding protein (MetQ).

The protein localises to the cell membrane. It catalyses the reaction L-methionine(out) + ATP + H2O = L-methionine(in) + ADP + phosphate + H(+). The enzyme catalyses D-methionine(out) + ATP + H2O = D-methionine(in) + ADP + phosphate + H(+). Functionally, part of the ABC transporter complex MetNIQ involved in methionine import. Responsible for energy coupling to the transport system. The polypeptide is Methionine import ATP-binding protein MetN (Symbiobacterium thermophilum (strain DSM 24528 / JCM 14929 / IAM 14863 / T)).